A 300-amino-acid chain; its full sequence is Tyrosine recombinase XerC (300 aa).

The 87-residue stretch at 2 to 88 (IQEGKLEQQF…SLRSFYTFLL (87 aa)) folds into the Core-binding (CB) domain. The Tyr recombinase domain maps to 109 to 294 (RLPKFFYSEE…TKEHLKSTYM (186 aa)). Residues arginine 150, lysine 174, histidine 246, arginine 249, and histidine 272 contribute to the active site. Residue tyrosine 281 is the O-(3'-phospho-DNA)-tyrosine intermediate of the active site.

Belongs to the 'phage' integrase family. XerC subfamily. As to quaternary structure, forms a cyclic heterotetrameric complex composed of two molecules of XerC and two molecules of XerD.

The protein resides in the cytoplasm. Functionally, site-specific tyrosine recombinase, which acts by catalyzing the cutting and rejoining of the recombining DNA molecules. The XerC-XerD complex is essential to convert dimers of the bacterial chromosome into monomers to permit their segregation at cell division. It also contributes to the segregational stability of plasmids. The polypeptide is Tyrosine recombinase XerC (Listeria monocytogenes serovar 1/2a (strain ATCC BAA-679 / EGD-e)).